The chain runs to 255 residues: uncharacterized protein (255 aa).

This is an uncharacterized protein from Paracoccus denitrificans.